We begin with the raw amino-acid sequence, 798 residues long: Glycogen phosphorylase (798 aa).

Lysine 646 bears the N6-(pyridoxal phosphate)lysine mark.

It belongs to the glycogen phosphorylase family. Requires pyridoxal 5'-phosphate as cofactor.

The enzyme catalyses [(1-&gt;4)-alpha-D-glucosyl](n) + phosphate = [(1-&gt;4)-alpha-D-glucosyl](n-1) + alpha-D-glucose 1-phosphate. Its function is as follows. Phosphorylase is an important allosteric enzyme in carbohydrate metabolism. Enzymes from different sources differ in their regulatory mechanisms and in their natural substrates. However, all known phosphorylases share catalytic and structural properties. This is Glycogen phosphorylase (glgP) from Bacillus subtilis (strain 168).